The chain runs to 688 residues: Elongation factor G (688 aa).

The tr-type G domain occupies aspartate 8–leucine 282. GTP contacts are provided by residues alanine 17–threonine 24, aspartate 81–histidine 85, and asparagine 135–aspartate 138.

This sequence belongs to the TRAFAC class translation factor GTPase superfamily. Classic translation factor GTPase family. EF-G/EF-2 subfamily.

It localises to the cytoplasm. In terms of biological role, catalyzes the GTP-dependent ribosomal translocation step during translation elongation. During this step, the ribosome changes from the pre-translocational (PRE) to the post-translocational (POST) state as the newly formed A-site-bound peptidyl-tRNA and P-site-bound deacylated tRNA move to the P and E sites, respectively. Catalyzes the coordinated movement of the two tRNA molecules, the mRNA and conformational changes in the ribosome. The chain is Elongation factor G from Clostridium beijerinckii (strain ATCC 51743 / NCIMB 8052) (Clostridium acetobutylicum).